A 341-amino-acid polypeptide reads, in one-letter code: THO complex subunit 6 (341 aa).

7 WD repeats span residues 22 to 61 (RLHM…SSEA), 74 to 112 (AHDG…GCKE), 124 to 165 (LEVP…RVLR), 166 to 205 (GHTD…EVQT), 215 to 254 (SRPH…PTTI), 256 to 293 (PIRA…KAQV), and 295 to 339 (GSSP…AFSL). Serine 180 is subject to Phosphoserine.

It belongs to the WD repeat THOC6 family. Component of the THO subcomplex, which is composed of THOC1, THOC2, THOC3, THOC5, THOC6 and THOC7. The THO subcomplex interacts with DDX39B to form the THO-DDX39B complex which multimerizes into a 28-subunit tetrameric assembly. Component of the transcription/export (TREX) complex at least composed of ALYREF/THOC4, DDX39B, SARNP/CIP29, CHTOP and the THO subcomplex; in the complex interacts with THOC5; together with THOC5 and THOC7, plays a key structural role in the oligomerization of the THO-DDX39B complex. TREX seems to have a dynamic structure involving ATP-dependent remodeling.

It is found in the nucleus. The protein resides in the nucleus speckle. Its function is as follows. Component of the THO subcomplex of the TREX complex which is thought to couple mRNA transcription, processing and nuclear export, and which specifically associates with spliced mRNA and not with unspliced pre-mRNA. Plays a key structural role in the oligomerization of the THO-DDX39B complex. TREX is recruited to spliced mRNAs by a transcription-independent mechanism, binds to mRNA upstream of the exon-junction complex (EJC) and is recruited in a splicing- and cap-dependent manner to a region near the 5' end of the mRNA where it functions in mRNA export to the cytoplasm via the TAP/NXF1 pathway. Plays a role in apoptosis negative control involved in brain development. In terms of biological role, (Microbial infection) The TREX complex is essential for the export of Kaposi's sarcoma-associated herpesvirus (KSHV) intronless mRNAs and infectious virus production. The polypeptide is THO complex subunit 6 (THOC6) (Homo sapiens (Human)).